Consider the following 393-residue polypeptide: MTTSVIVAGARTPIGKLMGSLKDFSASELGAIAIKGALEKANVPASLVEYVIMGQVLTAGAGQMPARQAAVAAGIGWDVPALTINKMCLSGIDAIALADQLIRAREFDVVVAGGQESMTKAPHLLMNSRSGYKYGDVTVLDHMAYDGLHDVFTDQPMGALTEQRNDVDMFTRSEQDEYAAASHQKAAAAWKDGVFADEVIPVNIPQRTGDPLQFTEDEGIRANTTAAALAGLKPAFRGDGTITAGSASQISDGAAAVVVMNQEKAQELGLTWLAEIGAHGVVAGPDSTLQSQPANAINKALDREGISVDQLDVVEINEAFAAVALASIRELGLNPQIVNVNGGAIAVGHPLGMSGTRITLHAALQLARRGSGVGVAALCGAGGQGDALILRAG.

Position 2 (Thr-2) is a propeptide, removed; alternate. Cys-88 (acyl-thioester intermediate) is an active-site residue. Catalysis depends on proton acceptor residues His-349 and Cys-379.

This sequence belongs to the thiolase-like superfamily. Thiolase family.

The catalysed reaction is 2 acetyl-CoA = acetoacetyl-CoA + CoA. This Mycobacterium tuberculosis (strain ATCC 25618 / H37Rv) protein is Probable acetyl-CoA acetyltransferase (fadA4).